Reading from the N-terminus, the 1221-residue chain is Coatomer subunit alpha (1221 aa).

WD repeat units lie at residues 7–46 (TKASRVKGLSFHPTRPWILASLHSGSIHLYDYRIKTLLEK), 49–88 (EHEGPVRGINFHMTQPLFVSGGDDYKIKVWNYKQRRCLFT), 91–130 (GHKDYIRSVEFHREAPWIVSSSDDMVIRIWNWQSRTCIAE), 133–172 (GHNHYVMSALFHPKDDLVVSASLDQTIRIWDISGLKKKMT), 202–241 (GHDRGVNWASFHPTQPYIVSASDDHQVKLWRMNDPIVDTF), 243–282 (GHYNNVSCALFHPRQDLIISNSEDKTIRVWDIIKKSTVHM), 285–323 (RDHDRFWTLASHPNQNLFAAGHDSGMIVFKLERERPLFV), 358–399 (PSNN…SNTV), and 528–567 (WDDNGVFIYSTSNHLKYLLQNGDNGTIRTLESTIYITGVK). The tract at residues 820–885 (GVEQSTSTPT…DDGGWERDDL (66 aa)) is disordered. Positions 844–857 (SQQQSSQQQQQQQQ) are enriched in low complexity. Residues 910 to 953 (PQPGPSFSMIWARNSQFAVDHIAAGSFESAMNILNSQIGAVNFD) form a WD 10 repeat.

Oligomeric complex that consists of at least the alpha, beta, beta', gamma, delta, epsilon and zeta subunits.

The protein resides in the cytoplasm. The protein localises to the golgi apparatus membrane. The coatomer is a cytosolic protein complex that binds to dilysine motifs and reversibly associates with Golgi non-clathrin-coated vesicles, which further mediate biosynthetic protein transport from the ER, via the Golgi up to the trans Golgi network. Coatomer complex is required for budding from Golgi membranes, and is essential for the retrograde Golgi-to-ER transport of dilysine-tagged proteins. This chain is Coatomer subunit alpha (copa), found in Dictyostelium discoideum (Social amoeba).